Here is a 507-residue protein sequence, read N- to C-terminus: MTVHQAPGTPGSVISLRPRYDNWIGGDWKAPAEGRYFANPTPVTGEEYTEIARSTAADIDLALDAAHAAAPAWGRTAPAERAAVLGRIADRIEQHLTELAVAEVWDNGKPIREALAADLPLAVDHFRYFAGVLRAQEGSISQLDEDTVAYHFHEPLGVVGQIIPWNFPLLMAVWKLAPALAAGNAVVLKPAEQTPVSILVLMELIADILPPGVINVVNGFGIEAGKPLAINPRIAKVAFTGETTTGRLIMQYASQNLIPVTLELGGKSPNLFFEDVAAARDDFYDKALEGFTMFALNQGEVCTCPSRALIAGGIYDGFLGDALERTRAVKQGNPLDTETMIGAQASNDQLEKILSYIDIGTAEGAKVLTGGERVDLGGSLSGGYYVAPTIFEGDNRMRIFQEEIFGPVVSVTRFDGYDDAISIANDTLYGLGAGVWTRDLSTAYRAGRAIQAGRVWTNCYHAYPAHAAFGGYKNSGIGRETHKMMLDHYQQTKNLLISYSAKGPGLF.

NAD(+) is bound at residue 219–225 (GFGIEAG). Residues E263 and C302 contribute to the active site.

The protein belongs to the aldehyde dehydrogenase family. Homotetramer.

It carries out the reaction fluoroacetaldehyde + NAD(+) + H2O = fluoroacetate + NADH + 2 H(+). Catalyzes the oxidation of fluoroacetaldehyde to fluoroacetate. Has high affinity for fluoroacetate and glycolaldehyde but not for acetaldehyde. In Streptantibioticus cattleyicolor (strain ATCC 35852 / DSM 46488 / JCM 4925 / NBRC 14057 / NRRL 8057) (Streptomyces cattleya), this protein is Fluoroacetaldehyde dehydrogenase.